The sequence spans 181 residues: ATP synthase subunit b (181 aa).

A helical transmembrane segment spans residues 23-43 (FIHIPTFIYTALNLVILYFIL).

The protein belongs to the ATPase B chain family. As to quaternary structure, F-type ATPases have 2 components, F(1) - the catalytic core - and F(0) - the membrane proton channel. F(1) has five subunits: alpha(3), beta(3), gamma(1), delta(1), epsilon(1). F(0) has three main subunits: a(1), b(2) and c(10-14). The alpha and beta chains form an alternating ring which encloses part of the gamma chain. F(1) is attached to F(0) by a central stalk formed by the gamma and epsilon chains, while a peripheral stalk is formed by the delta and b chains.

It localises to the cell membrane. In terms of biological role, f(1)F(0) ATP synthase produces ATP from ADP in the presence of a proton or sodium gradient. F-type ATPases consist of two structural domains, F(1) containing the extramembraneous catalytic core and F(0) containing the membrane proton channel, linked together by a central stalk and a peripheral stalk. During catalysis, ATP synthesis in the catalytic domain of F(1) is coupled via a rotary mechanism of the central stalk subunits to proton translocation. Component of the F(0) channel, it forms part of the peripheral stalk, linking F(1) to F(0). The protein is ATP synthase subunit b of Acetivibrio thermocellus (strain ATCC 27405 / DSM 1237 / JCM 9322 / NBRC 103400 / NCIMB 10682 / NRRL B-4536 / VPI 7372) (Clostridium thermocellum).